The following is a 218-amino-acid chain: 3,4-dihydroxy-2-butanone 4-phosphate synthase (218 aa).

Residues 38–39, D43, 151–155, and E175 each bind D-ribulose 5-phosphate; these read RE and RRGHT. Position 39 (E39) interacts with Mg(2+). H154 lines the Mg(2+) pocket.

The protein belongs to the DHBP synthase family. Homodimer. It depends on Mg(2+) as a cofactor. Requires Mn(2+) as cofactor.

It catalyses the reaction D-ribulose 5-phosphate = (2S)-2-hydroxy-3-oxobutyl phosphate + formate + H(+). It functions in the pathway cofactor biosynthesis; riboflavin biosynthesis; 2-hydroxy-3-oxobutyl phosphate from D-ribulose 5-phosphate: step 1/1. Functionally, catalyzes the conversion of D-ribulose 5-phosphate to formate and 3,4-dihydroxy-2-butanone 4-phosphate. The chain is 3,4-dihydroxy-2-butanone 4-phosphate synthase from Vibrio atlanticus (strain LGP32) (Vibrio splendidus (strain Mel32)).